Here is an 87-residue protein sequence, read N- to C-terminus: Pyocin-S1 immunity protein (87 aa).

This sequence belongs to the colicins ColE2/ColE8/ColE9 and pyocins S1/S2 family.

The polypeptide is Pyocin-S1 immunity protein (imm1) (Pseudomonas aeruginosa).